Consider the following 294-residue polypeptide: 33 kDa chaperonin (294 aa).

2 disulfides stabilise this stretch: Cys236–Cys238 and Cys269–Cys272.

Belongs to the HSP33 family. In terms of processing, under oxidizing conditions two disulfide bonds are formed involving the reactive cysteines. Under reducing conditions zinc is bound to the reactive cysteines and the protein is inactive.

The protein resides in the cytoplasm. In terms of biological role, redox regulated molecular chaperone. Protects both thermally unfolding and oxidatively damaged proteins from irreversible aggregation. Plays an important role in the bacterial defense system toward oxidative stress. The chain is 33 kDa chaperonin from Desulforamulus reducens (strain ATCC BAA-1160 / DSM 100696 / MI-1) (Desulfotomaculum reducens).